The primary structure comprises 654 residues: tRNA 5-methylaminomethyl-2-thiouridine biosynthesis bifunctional protein MnmC (654 aa).

Residues 1-235 (MSDFQHAQLD…KREMLGGTYQ (235 aa)) are tRNA (mnm(5)s(2)U34)-methyltransferase. An FAD-dependent cmnm(5)s(2)U34 oxidoreductase region spans residues 261-654 (VGGGLAGCAS…LRDLVRGQRG (394 aa)).

This sequence in the N-terminal section; belongs to the methyltransferase superfamily. tRNA (mnm(5)s(2)U34)-methyltransferase family. It in the C-terminal section; belongs to the DAO family. The cofactor is FAD.

The protein resides in the cytoplasm. It carries out the reaction 5-aminomethyl-2-thiouridine(34) in tRNA + S-adenosyl-L-methionine = 5-methylaminomethyl-2-thiouridine(34) in tRNA + S-adenosyl-L-homocysteine + H(+). In terms of biological role, catalyzes the last two steps in the biosynthesis of 5-methylaminomethyl-2-thiouridine (mnm(5)s(2)U) at the wobble position (U34) in tRNA. Catalyzes the FAD-dependent demodification of cmnm(5)s(2)U34 to nm(5)s(2)U34, followed by the transfer of a methyl group from S-adenosyl-L-methionine to nm(5)s(2)U34, to form mnm(5)s(2)U34. This chain is tRNA 5-methylaminomethyl-2-thiouridine biosynthesis bifunctional protein MnmC, found in Pseudomonas aeruginosa (strain UCBPP-PA14).